Consider the following 106-residue polypeptide: Synaptic plasticity regulator PANTS (106 aa).

The disordered stretch occupies residues 67–106 (LQQSEKTRLEGKQNNSPVWTLRKNPPPDWYLPLDPGKPRQ).

This sequence belongs to the UPF0545 family. In terms of processing, rapidly degraded by proteolysis following neuronal stimulation, resulting in increased AMPA receptor clustering.

The protein resides in the synapse. It is found in the synaptic cleft. Its function is as follows. Negatively regulates long-term potentiation and modulates adult synaptic plasticity. The polypeptide is Synaptic plasticity regulator PANTS (Xenopus laevis (African clawed frog)).